The sequence spans 999 residues: Helicase required for RNAi-mediated heterochromatin assembly 1 (999 aa).

The segment at Glu-61–Arg-90 is disordered. A compositionally biased stretch (basic and acidic residues) spans Lys-70 to Ser-88. Ser-94 bears the Phosphoserine mark. Residues Arg-106–Ala-124 are compositionally biased toward basic and acidic residues. The segment at Arg-106–Arg-131 is disordered. Residue Gly-393–Ser-400 coordinates ATP.

Cid12, hrr1 and rdp1 interact forming the RNA-directed RNA polymerase complex (RDRC). The RDRC complex interacts with the RITS complex via interaction between ago1 and hrr1. Clr4 has a role in mediating this interaction.

The protein localises to the cytoplasm. It is found in the nucleus. It carries out the reaction ATP + H2O = ADP + phosphate + H(+). Has a role in the RNA interference (RNAi) pathway which is important for heterochromatin formation and accurate chromosome segregation. A member of the RNA-directed RNA polymerase complex (RDRC) which is involved in the generation of small interfering RNAs (siRNAs) and mediate their association with the RNA-induced transcriptional silencing (RITS) complex. RITS acts as a priming complex for dsRNA synthesis at the site of non-coding centromeric RNA. The sequence is that of Helicase required for RNAi-mediated heterochromatin assembly 1 (hrr1) from Schizosaccharomyces pombe (strain 972 / ATCC 24843) (Fission yeast).